Reading from the N-terminus, the 295-residue chain is Pyridoxal 5'-phosphate synthase subunit PdxS (295 aa).

Asp-25 contacts D-ribose 5-phosphate. Residue Lys-82 is the Schiff-base intermediate with D-ribose 5-phosphate of the active site. Gly-154 lines the D-ribose 5-phosphate pocket. Arg-166 contacts D-glyceraldehyde 3-phosphate. D-ribose 5-phosphate contacts are provided by residues Gly-215 and 236–237 (GS).

It belongs to the PdxS/SNZ family. In terms of assembly, in the presence of PdxT, forms a dodecamer of heterodimers.

The enzyme catalyses aldehydo-D-ribose 5-phosphate + D-glyceraldehyde 3-phosphate + L-glutamine = pyridoxal 5'-phosphate + L-glutamate + phosphate + 3 H2O + H(+). It participates in cofactor biosynthesis; pyridoxal 5'-phosphate biosynthesis. In terms of biological role, catalyzes the formation of pyridoxal 5'-phosphate from ribose 5-phosphate (RBP), glyceraldehyde 3-phosphate (G3P) and ammonia. The ammonia is provided by the PdxT subunit. Can also use ribulose 5-phosphate and dihydroxyacetone phosphate as substrates, resulting from enzyme-catalyzed isomerization of RBP and G3P, respectively. In Bacillus cytotoxicus (strain DSM 22905 / CIP 110041 / 391-98 / NVH 391-98), this protein is Pyridoxal 5'-phosphate synthase subunit PdxS.